Here is a 424-residue protein sequence, read N- to C-terminus: Argininosuccinate synthase (424 aa).

Residues 9 to 17 and alanine 35 each bind ATP; that span reads AYSGGLDTS. Tyrosine 86 and serine 91 together coordinate L-citrulline. An ATP-binding site is contributed by 114–122; that stretch reads SHGATGKGN. L-aspartate contacts are provided by threonine 118, asparagine 122, and aspartate 123. Asparagine 122 is a binding site for L-citrulline. Arginine 126, serine 179, serine 188, glutamate 269, and tyrosine 281 together coordinate L-citrulline.

This sequence belongs to the argininosuccinate synthase family. In terms of assembly, homotetramer.

It catalyses the reaction L-citrulline + L-aspartate + ATP = 2-(N(omega)-L-arginino)succinate + AMP + diphosphate + H(+). The protein operates within amino-acid biosynthesis; L-arginine biosynthesis; L-arginine from L-ornithine and carbamoyl phosphate: step 2/3. It functions in the pathway nitrogen metabolism; urea cycle; (N(omega)-L-arginino)succinate from L-aspartate and L-citrulline: step 1/1. The protein is Argininosuccinate synthase of Anopheles gambiae (African malaria mosquito).